The sequence spans 267 residues: NAD kinase (267 aa).

Residue aspartate 45 is the Proton acceptor of the active site. Residues 45 to 46 (DG), 121 to 122 (NE), arginine 147, aspartate 149, 160 to 165 (TAYSKS), and alanine 184 contribute to the NAD(+) site.

This sequence belongs to the NAD kinase family. A divalent metal cation is required as a cofactor.

It is found in the cytoplasm. The enzyme catalyses NAD(+) + ATP = ADP + NADP(+) + H(+). Its function is as follows. Involved in the regulation of the intracellular balance of NAD and NADP, and is a key enzyme in the biosynthesis of NADP. Catalyzes specifically the phosphorylation on 2'-hydroxyl of the adenosine moiety of NAD to yield NADP. This Lactobacillus acidophilus (strain ATCC 700396 / NCK56 / N2 / NCFM) protein is NAD kinase.